The sequence spans 324 residues: uncharacterized protein (324 aa).

This is an uncharacterized protein from Dryophytes versicolor (chameleon treefrog).